The chain runs to 312 residues: F-box protein At1g11270 (312 aa).

The F-box domain occupies 29–80 (SVVKLLLPHDVVGLILERLPVESLLRFKCVSNQWKSTIESQCFQERQLIRRM).

The sequence is that of F-box protein At1g11270 from Arabidopsis thaliana (Mouse-ear cress).